Here is a 366-residue protein sequence, read N- to C-terminus: Sperm equatorial segment protein 1 (366 aa).

Residues 1–18 (MKFLVLLVALLLWPSSLP) form the signal peptide. The N-linked (GlcNAc...) asparagine glycan is linked to N129. Residues 139 to 204 (PFIEKDEPEP…EDVPQLSGDN (66 aa)) are disordered. The span at 144–157 (DEPEPEPEPEPEPE) shows a compositional bias: acidic residues. Positions 165 to 189 (APTQVPSVTEPSQDVTSLSGSTDLG) are enriched in polar residues.

It belongs to the SPESP1 family. Post-translationally, glycosylated. In testis there are two predominant forms of 77- and 67-kDa and a form of 47-kDa, whereas in epididymal sperm from caput, corpus, and cauda there are two forms of 47- and 43-kDa. Testis forms contain complex carbohydrate residues. Epididymal sperm forms are N-glycosylated. Then undergoes significant glycosylation in the testis and that the majority of these glycoconjugates are removed by the time sperm reach the caput epididymis.

The protein localises to the cytoplasmic vesicle. The protein resides in the secretory vesicle. It is found in the acrosome. Functionally, involved in fertilization ability of sperm. This Bos taurus (Bovine) protein is Sperm equatorial segment protein 1.